The sequence spans 339 residues: GTPase Era (339 aa).

The RPE1 insert domain maps to 4–48; that stretch reads RHLAKFAYREEFKGDTEALAAAVREDASTGSTSQLPLEVQFGKMS. Residues 51-220 enclose the Era-type G domain; it reads KTVSVCIIGR…ITSKAKISPW (170 aa). The segment at 59-66 is G1; that stretch reads GRPNSGKS. A GTP-binding site is contributed by 59–66; that stretch reads GRPNSGKS. Positions 85-89 are G2; that stretch reads QTTRS. The interval 106–109 is G3; the sequence is DTPG. GTP contacts are provided by residues 106 to 110 and 168 to 171; these read DTPGI and NKID. The segment at 168-171 is G4; the sequence is NKID. The segment at 196-198 is G5; the sequence is ISA. The KH type-2 domain maps to 248–325; sequence LQKELPYKLT…HLFLFVKVRE (78 aa).

This sequence belongs to the TRAFAC class TrmE-Era-EngA-EngB-Septin-like GTPase superfamily. Era GTPase family. As to quaternary structure, monomer.

Its subcellular location is the cytoplasm. The protein localises to the cell inner membrane. An essential GTPase that binds both GDP and GTP, with rapid nucleotide exchange. Plays a role in 16S rRNA processing and 30S ribosomal subunit biogenesis and possibly also in cell cycle regulation and energy metabolism. This Rickettsia conorii (strain ATCC VR-613 / Malish 7) protein is GTPase Era.